Consider the following 175-residue polypeptide: Alkyl hydroperoxide reductase AhpD (175 aa).

The active-site Proton donor is the cysteine 131. Cysteine 131 and cysteine 134 are disulfide-bonded. Catalysis depends on cysteine 134, which acts as the Cysteine sulfenic acid (-SOH) intermediate.

This sequence belongs to the AhpD family.

The enzyme catalyses N(6)-[(R)-dihydrolipoyl]-L-lysyl-[lipoyl-carrier protein] + a hydroperoxide = N(6)-[(R)-lipoyl]-L-lysyl-[lipoyl-carrier protein] + an alcohol + H2O. Antioxidant protein with alkyl hydroperoxidase activity. Required for the reduction of the AhpC active site cysteine residues and for the regeneration of the AhpC enzyme activity. The protein is Alkyl hydroperoxide reductase AhpD of Brucella abortus (strain 2308).